Consider the following 401-residue polypeptide: Imidazolonepropionase (401 aa).

Positions 70 and 72 each coordinate Fe(3+). Zn(2+) is bound by residues histidine 70 and histidine 72. 4-imidazolone-5-propanoate is bound by residues arginine 79, tyrosine 142, and histidine 175. Tyrosine 142 contributes to the N-formimidoyl-L-glutamate binding site. Histidine 240 provides a ligand contact to Fe(3+). Histidine 240 contributes to the Zn(2+) binding site. Residue glutamine 243 coordinates 4-imidazolone-5-propanoate. Aspartate 315 is a binding site for Fe(3+). Aspartate 315 is a Zn(2+) binding site. The N-formimidoyl-L-glutamate site is built by asparagine 317 and glycine 319. Threonine 320 lines the 4-imidazolone-5-propanoate pocket.

It belongs to the metallo-dependent hydrolases superfamily. HutI family. Requires Zn(2+) as cofactor. It depends on Fe(3+) as a cofactor.

It is found in the cytoplasm. The enzyme catalyses 4-imidazolone-5-propanoate + H2O = N-formimidoyl-L-glutamate. It functions in the pathway amino-acid degradation; L-histidine degradation into L-glutamate; N-formimidoyl-L-glutamate from L-histidine: step 3/3. In terms of biological role, catalyzes the hydrolytic cleavage of the carbon-nitrogen bond in imidazolone-5-propanoate to yield N-formimidoyl-L-glutamate. It is the third step in the universal histidine degradation pathway. The protein is Imidazolonepropionase of Caulobacter sp. (strain K31).